The following is a 509-amino-acid chain: Scavenger receptor class B member 1 (509 aa).

Residues 1-11 (MGSRSRARQVA) are Cytoplasmic-facing. A helical transmembrane segment spans residues 12 to 32 (AALGFVGLLLAALGAVMIVMV). Residues 33-439 (PSIIKQQVLK…FYTQLVLMPK (407 aa)) are Extracellular-facing. Residues Asn102, Asn108, Asn173, Asn212, Asn255, Asn310, Asn330, and Asn383 are each glycosylated (N-linked (GlcNAc...) asparagine). Cys251 and Cys384 form a disulfide bridge. Residues 440–460 (VLHYAQYVLLALGCVLLFIPI) traverse the membrane as a helical segment. Residues 461–509 (VYQIRSQEKCYLFWSSSKKGSKDKEAIQAYSESLMTPAPKGTVLQEARL) lie on the Cytoplasmic side of the membrane.

The protein belongs to the CD36 family. The C-terminal region binds to PDZK1. In terms of processing, N-glycosylated. Post-translationally, the six cysteines of the extracellular domain are all involved in intramolecular disulfide bonds.

Its subcellular location is the cell membrane. It localises to the membrane. The protein resides in the caveola. In terms of biological role, receptor for different ligands such as phospholipids, cholesterol ester, lipoproteins, phosphatidylserine and apoptotic cells. Receptor for HDL, mediating selective uptake of cholesteryl ether and HDL-dependent cholesterol efflux. Also facilitates the flux of free and esterified cholesterol between the cell surface and apoB-containing lipoproteins and modified lipoproteins, although less efficiently than HDL. May be involved in the phagocytosis of apoptotic cells, via its phosphatidylserine binding activity. The chain is Scavenger receptor class B member 1 (SCARB1) from Sus scrofa (Pig).